The sequence spans 466 residues: Ribulose bisphosphate carboxylase large chain (466 aa).

K5 bears the N6,N6,N6-trimethyllysine mark. Positions 114 and 164 each coordinate substrate. The active-site Proton acceptor is the K166. Residue K168 participates in substrate binding. Residues K192, D194, and E195 each contribute to the Mg(2+) site. K192 is subject to N6-carboxylysine. H285 acts as the Proton acceptor in catalysis. Residues R286, H318, and S370 each contribute to the substrate site.

It belongs to the RuBisCO large chain family. Type I subfamily. In terms of assembly, heterohexadecamer of 8 large chains and 8 small chains; disulfide-linked. The disulfide link is formed within the large subunit homodimers. Mg(2+) serves as cofactor. In terms of processing, the disulfide bond which can form in the large chain dimeric partners within the hexadecamer appears to be associated with oxidative stress and protein turnover.

The protein localises to the plastid. The protein resides in the chloroplast. It carries out the reaction 2 (2R)-3-phosphoglycerate + 2 H(+) = D-ribulose 1,5-bisphosphate + CO2 + H2O. It catalyses the reaction D-ribulose 1,5-bisphosphate + O2 = 2-phosphoglycolate + (2R)-3-phosphoglycerate + 2 H(+). Functionally, ruBisCO catalyzes two reactions: the carboxylation of D-ribulose 1,5-bisphosphate, the primary event in carbon dioxide fixation, as well as the oxidative fragmentation of the pentose substrate in the photorespiration process. Both reactions occur simultaneously and in competition at the same active site. The chain is Ribulose bisphosphate carboxylase large chain from Drosera binata (Fork-leaved sundew).